Here is a 193-residue protein sequence, read N- to C-terminus: MAKKQSILSPIIRITFTFLVLCGLVYPLIVTGIAQAVMKDNADGSLIYNDKNEVIGSKLIGQNFTDPRYFHGRVSSIEYKAEASGSNNYAPSNPDLEKRVEKSIEEWKKQNPSVPVTEVPIDLVTNSGSGLDPDISPKAASVQVERISKLTNIPKETLDQLIKDQTEGAALGLFGETRVNVLKLNLGLQKIMK.

A helical transmembrane segment spans residues 14–34 (ITFTFLVLCGLVYPLIVTGIA).

Belongs to the KdpC family. In terms of assembly, the system is composed of three essential subunits: KdpA, KdpB and KdpC.

It localises to the cell membrane. Functionally, part of the high-affinity ATP-driven potassium transport (or Kdp) system, which catalyzes the hydrolysis of ATP coupled with the electrogenic transport of potassium into the cytoplasm. This subunit acts as a catalytic chaperone that increases the ATP-binding affinity of the ATP-hydrolyzing subunit KdpB by the formation of a transient KdpB/KdpC/ATP ternary complex. The chain is Potassium-transporting ATPase KdpC subunit from Bacillus anthracis (strain A0248).